The chain runs to 265 residues: 4-hydroxy-2-oxo-heptane-1,7-dioate aldolase (265 aa).

H45 functions as the Proton acceptor in the catalytic mechanism. Substrate is bound at residue Q147. An a divalent metal cation-binding site is contributed by E149. The substrate site is built by A174 and D175. D175 serves as a coordination point for a divalent metal cation.

Belongs to the HpcH/HpaI aldolase family. In terms of assembly, homohexamer; trimer of dimers. The cofactor is a divalent metal cation.

It carries out the reaction 4-hydroxy-2-oxoheptanedioate = succinate semialdehyde + pyruvate. It participates in aromatic compound metabolism; 4-hydroxyphenylacetate degradation; pyruvate and succinate semialdehyde from 4-hydroxyphenylacetate: step 7/7. In terms of biological role, catalyzes the reversible retro-aldol cleavage of 4-hydroxy-2-ketoheptane-1,7-dioate (HKHD) to pyruvate and succinic semialdehyde. The polypeptide is 4-hydroxy-2-oxo-heptane-1,7-dioate aldolase (Klebsiella pneumoniae subsp. pneumoniae (strain ATCC 700721 / MGH 78578)).